We begin with the raw amino-acid sequence, 442 residues long: Protein translocase subunit SecF (442 aa).

The interval 1–39 (MASKAKTGRDDEATSAVELTEATESAVARTDGDSTTDTA) is disordered. Helical transmembrane passes span 67-87 (WFGV…FRGF), 187-207 (ITKK…LYIT), 218-238 (AITA…LVGF), 243-263 (ATVI…VIVF), 301-321 (LIGV…LGVG), and 331-351 (LIGI…LLVT). Residues 366–442 (VLKRRNSGSP…PTGKRNAGRR (77 aa)) form a disordered region. The segment covering 402–432 (QASSQSAPRAAQGSSKPAPGARPVRPVGTRR) has biased composition (low complexity). Over residues 433 to 442 (PTGKRNAGRR) the composition is skewed to basic residues.

It belongs to the SecD/SecF family. SecF subfamily. In terms of assembly, forms a complex with SecD. Part of the essential Sec protein translocation apparatus which comprises SecA, SecYEG and auxiliary proteins SecDF. Other proteins may also be involved.

It localises to the cell membrane. Its function is as follows. Part of the Sec protein translocase complex. Interacts with the SecYEG preprotein conducting channel. SecDF uses the proton motive force (PMF) to complete protein translocation after the ATP-dependent function of SecA. This is Protein translocase subunit SecF from Mycobacterium tuberculosis (strain CDC 1551 / Oshkosh).